A 22-amino-acid polypeptide reads, in one-letter code: uncharacterized protein (22 aa).

It belongs to the asfivirus C84L family.

This is an uncharacterized protein from Ornithodoros (relapsing fever ticks).